The primary structure comprises 1170 residues: MGLAWGLGVLFLMHVCGTNRIPESGGDNSVFDIFELTGAARKGSGRRLVKGPDPSSPAFRIEDANLIPPVPDDKFQDLVDAVRAEKGFLLLASLRQMKKTRGTLLALERKDHSGQVFSVVSNGKAGTLDLSLTVQGKQHVVSVEEALLATGQWKSITLFVQEDRAQLYIDCEKMENAELDVPIQSVFTRDLASIARLRIAKGGVNDNFQGVLQNVRFVFGTTPEDILRNKGCSSSTSVLLTLDNNVVNGSSPAIRTNYIGHKTKDLQAICGISCDELSSMVLELRGLRTIVTTLQDSIRKVTEENKELANELRRPPLCYHNGVQYRNNEEWTVDSCTECHCQNSVTICKKVSCPIMPCSNATVPDGECCPRCWPSDSADDGWSPWSEWTSCSTSCGNGIQQRGRSCDSLNNRCEGSSVQTRTCHIQECDKRFKQDGGWSHWSPWSSCSVTCGDGVITRIRLCNSPSPQMNGKPCEGEARETKACKKDACPINGGWGPWSPWDICSVTCGGGVQKRSRLCNNPTPQFGGKDCVGDVTENQICNKQDCPIDGCLSNPCFAGVKCTSYPDGSWKCGACPPGYSGNGIQCTDVDECKEVPDACFNHNGEHRCENTDPGYNCLPCPPRFTGSQPFGQGVEHATANKQVCKPRNPCTDGTHDCNKNAKCNYLGHYSDPMYRCECKPGYAGNGIICGEDTDLDGWPNENLVCVANATYHCKKDNCPNLPNSGQEDYDKDGIGDACDDDDDNDKIPDDRDNCPFHYNPAQYDYDRDDVGDRCDNCPYNHNPDQADTDNNGEGDACAADIDGDGILNERDNCQYVYNVDQRDTDMDGVGDQCDNCPLEHNPDQLDSDSDRIGDTCDNNQDIDEDGHQNNLDNCPYVPNANQADHDKDGKGDACDHDDDNDGIPDDKDNCRLVPNPDQKDSDGDGRGDACKDDFDHDSVPDIDDICPENVDISETDFRRFQMIPLDPKGTSQNDPNWVVRHQGKELVQTVNCDPGLAVGYDEFNAVDFSGTFFINTERDDDYAGFVFGYQSSSRFYVVMWKQVTQSYWDTNPTRAQGYSGLSVKVVNSTTGPGEHLRNALWHTGNTPGQVRTLWHDPRHIGWKDFTAYRWRLSHRPKTGFIRVVMYEGKKIMADSGPIYDKTYAGGRLGLFVFSQEMVFFSDLKYECRDP.

Positions methionine 1–threonine 18 are cleaved as a signal peptide. The heparin-binding stretch occupies residues arginine 47 to arginine 95. Residues asparagine 65–cysteine 270 enclose the Laminin G-like domain. Cysteines 171 and 232 form a disulfide. Asparagine 248 and asparagine 360 each carry an N-linked (GlcNAc...) asparagine glycan. Residues proline 316–tryptophan 373 enclose the VWFC domain. TSP type-1 domains are found at residues aspartate 379–aspartate 429, aspartate 435–proline 490, and asparagine 492–proline 547. A glycan (C-linked (Man) tryptophan) is linked at tryptophan 385. 3 disulfides stabilise this stretch: cysteine 391–cysteine 423, cysteine 395–cysteine 428, and cysteine 406–cysteine 413. Residue serine 394 is glycosylated (O-linked (Fuc...) serine). Tryptophan 438 and tryptophan 441 each carry a C-linked (Man) tryptophan glycan. 3 cysteine pairs are disulfide-bonded: cysteine 447/cysteine 484, cysteine 451/cysteine 489, and cysteine 462/cysteine 474. O-linked (Fuc...) threonine glycosylation is present at threonine 450. C-linked (Man) tryptophan glycosylation is present at tryptophan 498. 21 disulfide bridges follow: cysteine 504/cysteine 541, cysteine 508/cysteine 546, cysteine 519/cysteine 531, cysteine 551/cysteine 562, cysteine 556/cysteine 572, cysteine 575/cysteine 586, cysteine 592/cysteine 608, cysteine 599/cysteine 617, cysteine 620/cysteine 644, cysteine 650/cysteine 663, cysteine 657/cysteine 676, cysteine 678/cysteine 689, cysteine 705/cysteine 713, cysteine 718/cysteine 738, cysteine 754/cysteine 774, cysteine 777/cysteine 797, cysteine 813/cysteine 833, cysteine 836/cysteine 856, cysteine 874/cysteine 894, cysteine 910/cysteine 930, and cysteine 946/cysteine 1167. Threonine 507 carries O-linked (Fuc...) threonine glycosylation. Residues cysteine 531 to valine 1152 form an involved in retention in extracellular matrix (ECM); involved in trimer formation region. An EGF-like 1 domain is found at proline 547–threonine 587. The O-linked (Xyl) serine glycan is linked to serine 553. The EGF-like 2 domain occupies proline 646–glycine 690. TSP type-3 repeat units follow at residues glutamate 691–glutamine 726, glutamate 727–glutamine 762, tyrosine 763–glutamine 785, alanine 786–glutamine 821, arginine 822–glutamine 844, leucine 845–glutamine 882, alanine 883–glutamine 918, and lysine 919–glutamate 954. Residue asparagine 708 is glycosylated (N-linked (GlcNAc...) asparagine). The disordered stretch occupies residues glutamate 839 to phenylalanine 934. 3 stretches are compositionally biased toward basic and acidic residues: residues histidine 840–aspartate 854, alanine 883–cysteine 894, and aspartate 917–phenylalanine 934. A Cell attachment site motif is present at residues arginine 926–aspartate 928. The TSP C-terminal domain occupies arginine 958–proline 1170. The N-linked (GlcNAc...) asparagine glycan is linked to asparagine 1067.

This sequence belongs to the thrombospondin family. In terms of assembly, homotrimer; disulfide-linked. Can bind to fibrinogen, fibronectin, laminin, type V collagen and integrins alpha-V/beta-1, alpha-V/beta-3 and alpha-IIb/beta-3. Binds heparin. Interacts (via the C-terminal domain) with CD47. Interacts (via the TSP type I repeats) with CD36; the interaction conveys an antiangiogenic effect. Interacts (via the TSP type I repeats) with HRG; the interaction blocks the antiangiogenic effect of THBS1 with CD36. Interacts with ATF6 (via lumenal domain). Interacts with FN1; this interaction is enhanced by TNFAIP6, which may act as a bridging molecule between FN1 and THBS1. Interacts with SIRPA; the interaction stimulates phosphorylation of SIRPA. As to expression, expressed by platelets (at protein level). Expressed by monocyte-derived immature and mature dendritic cells (at protein level).

The protein localises to the secreted. It localises to the cell surface. Its subcellular location is the extracellular space. It is found in the extracellular matrix. The protein resides in the endoplasmic reticulum. The protein localises to the sarcoplasmic reticulum. In terms of biological role, adhesive glycoprotein that mediates cell-to-cell and cell-to-matrix interactions. Multifunctional, involved in inflammation, angiogenesis, wound healing, reactive oxygen species (ROS) signaling, nitrous oxide (NO) signaling, apoptosis, senescence, aging, cellular self-renewal, stemness, and cardiovascular and metabolic homeostasis. Negatively modulates dendritic cell activation and cytokine release, as part of an autocrine feedback loop, contributing to the resolution of inflammation and immune homeostasis. Ligand for receptor CD47. Modulates nitrous oxide (NO) signaling via CD47, hence playing a role as a pressor agent, supporting blood pressure. Plays a role in endothelial cell senescence, acting via CD47, by increasing the abundance and activation of NADPH oxidase NOX1, and so generating excess ROS. Inhibits stem cell self-renewal, acting via CD47 signaling, probably by regulation of the stem cell transcription factors POU5F1/OCT4, SOX2, MYC/c-Myc and KLF4. Negatively modulates wound healing, acting via CD47. Ligand for receptor CD36. Involved in inducing apoptosis in podocytes in response to elevated free fatty acids, acting via CD36. Plays a role in suppressing angiogenesis, acting, depending on context, via CD36 or CD47. Promotes cellular senescence in a TP53-CDKN1A-RB1 signaling-dependent manner. Ligand for immunoglobulin-like cell surface receptor SIRPA. Involved in ROS signaling in non-phagocytic cells, stimulating NADPH oxidase-derived ROS production, acting via interaction with SIRPA. Plays a role in metabolic dysfunction in diet-induced obesity, perhaps acting by exacerbating adipose inflammatory activity; its effects may be mediated, at least in part, through enhanced adipocyte proliferation. Plays a role in ER stress response, via its interaction with the activating transcription factor 6 alpha (ATF6) which produces adaptive ER stress response factors. May be involved in age-related conditions, including metabolic dysregulation, during normal aging. This is Thrombospondin-1 from Homo sapiens (Human).